The sequence spans 25 residues: MLDIFILMFFAIIGLVILSYIIYLL.

Residues 4 to 24 form a helical membrane-spanning segment; sequence IFILMFFAIIGLVILSYIIYL.

Its subcellular location is the membrane. May play a key role in the skin fibroblasts (FBs)-keratinocyte-like cells (KLCs). In Homo sapiens (Human), this protein is LASP1 neighbor protein.